We begin with the raw amino-acid sequence, 111 residues long: FK506-binding protein 1 (111 aa).

A disordered region spans residues 1–20 (MGVEKTIITQGSGPSPQVGQ). Positions 7-20 (IITQGSGPSPQVGQ) are enriched in polar residues. The PPIase FKBP-type domain maps to 19–111 (GQKVTMEYTG…IFDVELKKIG (93 aa)).

The protein belongs to the FKBP-type PPIase family. FKBP1 subfamily.

It is found in the cytoplasm. It catalyses the reaction [protein]-peptidylproline (omega=180) = [protein]-peptidylproline (omega=0). Inhibited by both FK506 and rapamycin. Its function is as follows. PPIases accelerate the folding of proteins. It catalyzes the cis-trans isomerization of proline imidic peptide bonds in oligopeptides. The polypeptide is FK506-binding protein 1 (FPR1) (Gibberella zeae (strain ATCC MYA-4620 / CBS 123657 / FGSC 9075 / NRRL 31084 / PH-1) (Wheat head blight fungus)).